Here is an 863-residue protein sequence, read N- to C-terminus: Nitrate reductase [NADH] (863 aa).

Residue cysteine 137 participates in Mo-molybdopterin binding. One can recognise a Cytochrome b5 heme-binding domain in the interval 484–559 (KKYVTKAMLE…LEQFYIAELA (76 aa)). Heme is bound by residues histidine 519 and histidine 542. The region spanning 602–719 (KKQKAAELKE…KGPIGHFHYD (118 aa)) is the FAD-binding FR-type domain. FAD-binding positions include 659-662 (RAYT), 676-680 (VVKIY), phenylalanine 688, 693-695 (KFS), and threonine 746.

This sequence belongs to the nitrate reductase family. In terms of assembly, homodimer. The cofactor is FAD. It depends on Mo-molybdopterin as a cofactor. Heme is required as a cofactor.

The catalysed reaction is nitrite + NAD(+) + H2O = nitrate + NADH + H(+). Its function is as follows. Nitrate reductase is a key enzyme involved in the first step of nitrate assimilation in plants, fungi and bacteria. The chain is Nitrate reductase [NADH] from Ulva prolifera (Green seaweed).